A 112-amino-acid chain; its full sequence is MSKLKAQSALQKLIESQKNPNANEDGYFRRKRLAKKERPFEPKKLVQQQQRLKEKKKNENIIYLKKTMRVTPSEEKIHEMINQKRETKKRKRKQKKKNDDDYGVFEEDMLEL.

Disordered regions lie at residues 1 to 53 and 80 to 112; these read MSKL…QRLK and MINQKRETKKRKRKQKKKNDDDYGVFEEDMLEL. Over residues 8–22 the composition is skewed to polar residues; sequence SALQKLIESQKNPNA. Over residues 86–96 the composition is skewed to basic residues; sequence ETKKRKRKQKK. The span at 101–112 shows a compositional bias: acidic residues; sequence DYGVFEEDMLEL.

It localises to the nucleus. The protein localises to the nucleolus. This is an uncharacterized protein from Schizosaccharomyces pombe (strain 972 / ATCC 24843) (Fission yeast).